The sequence spans 199 residues: Protein-methionine-sulfoxide reductase heme-binding subunit MsrQ (199 aa).

The next 5 helical transmembrane spans lie at 13–33 (VLLHLAGFLPLLWLILSVDQG), 79–99 (LLGLWCFFWATLHLVSYALLE), 120–140 (LGIISWLILLALAVTSPQIMM), 147–167 (WQKLHNFVYLVAILTPIHYLW), and 169–189 (VKTLSPQPILYALAALILLLL).

This sequence belongs to the MsrQ family. As to quaternary structure, heterodimer of a catalytic subunit (MsrP) and a heme-binding subunit (MsrQ). The cofactor is FMN. Requires heme b as cofactor.

It localises to the cell inner membrane. Its function is as follows. Part of the MsrPQ system that repairs oxidized periplasmic proteins containing methionine sulfoxide residues (Met-O), using respiratory chain electrons. Thus protects these proteins from oxidative-stress damage caused by reactive species of oxygen and chlorine generated by the host defense mechanisms. MsrPQ is essential for the maintenance of envelope integrity under bleach stress, rescuing a wide series of structurally unrelated periplasmic proteins from methionine oxidation. MsrQ provides electrons for reduction to the reductase catalytic subunit MsrP, using the quinone pool of the respiratory chain. The polypeptide is Protein-methionine-sulfoxide reductase heme-binding subunit MsrQ (Pectobacterium atrosepticum (strain SCRI 1043 / ATCC BAA-672) (Erwinia carotovora subsp. atroseptica)).